An 815-amino-acid polypeptide reads, in one-letter code: Neuronal PAS domain-containing protein 2 (815 aa).

Positions 1–10 (MDEDEKDRAK) are enriched in basic and acidic residues. The tract at residues 1–21 (MDEDEKDRAKRASRNKSEKKR) is disordered. Residues 1–61 (MDEDEKDRAK…VIGFLQKHNE (61 aa)) form a sufficient for heterodimer formation with BMAL1, E-box binding and for the effect of NADPH region. Residues 9–59 (AKRASRNKSEKKRRDQFNVLIKELSSMLPGNTRKMDKTTVLEKVIGFLQKH) enclose the bHLH domain. Residues 82-152 (NEEFTQLMLE…KMLSSCMLMT (71 aa)) form the PAS 1 domain. Residues H119 and H171 each contribute to the heme b site. Residues 237-307 (FLKEMCIVEE…RCHEHLMQFG (71 aa)) form the PAS 2 domain. One can recognise a PAC domain in the interval 311–354 (SCCYRFLTKGQQWIWLQTHYYITYHQWNSKPEFIVCTHMVVSYA). Residues 405–420 (RTPSVSSRSSPKSSHT) are compositionally biased toward low complexity. Disordered regions lie at residues 405–467 (RTPS…SLPS), 584–656 (PGQI…AAGC), and 728–815 (FATT…QPLR). 3 stretches are compositionally biased toward polar residues: residues 425–462 (PAST…TALQ), 588–608 (ASPQ…SSQG), and 616–630 (ELTT…STAT). Low complexity-rich tracts occupy residues 633 to 655 (GPST…SAAG) and 732 to 752 (PPSQ…HQQQ). The segment covering 753–786 (RYLQVQTPSSLHNEQTDSLLLSSYSPQQGNMGYH) has biased composition (polar residues). Low complexity predominate over residues 787–815 (QTQQQQQQQQLPRRSNSLSESSNLPQPLR).

In terms of assembly, component of the circadian clock oscillator which includes the CRY proteins, CLOCK or NPAS2, BMAL1 or BMAL2, CSNK1D and/or CSNK1E, TIMELESS and the PER proteins. Efficient DNA binding requires dimerization with another bHLH protein. Forms a heterodimer with BMAL1 and this heterodimerization is required for E-box-dependent transactivation. Requires heme as cofactor. In terms of tissue distribution, expressed in the retinal photoreceptor cells (at protein level). Expressed in the pineal gland and retina.

It is found in the nucleus. Its activity is regulated as follows. Carbon monoxide (CO) and the redox state of the cell can modulate the transcriptional activity of the NPAS2-BMAL1 heterodimer. NADH and NADPH enhance the DNA-binding activity of the heterodimer whereas CO binds the heme group in NPAS2 and inhibits the DNA-binding activity of the heterodimer. In terms of biological role, transcriptional activator which forms a core component of the circadian clock. The circadian clock, an internal time-keeping system, regulates various physiological processes through the generation of approximately 24 hour circadian rhythms in gene expression, which are translated into rhythms in metabolism and behavior. It is derived from the Latin roots 'circa' (about) and 'diem' (day) and acts as an important regulator of a wide array of physiological functions including metabolism, sleep, body temperature, blood pressure, endocrine, immune, cardiovascular, and renal function. Consists of two major components: the central clock, residing in the suprachiasmatic nucleus (SCN) of the brain, and the peripheral clocks that are present in nearly every tissue and organ system. Both the central and peripheral clocks can be reset by environmental cues, also known as Zeitgebers (German for 'timegivers'). The predominant Zeitgeber for the central clock is light, which is sensed by retina and signals directly to the SCN. The central clock entrains the peripheral clocks through neuronal and hormonal signals, body temperature and feeding-related cues, aligning all clocks with the external light/dark cycle. Circadian rhythms allow an organism to achieve temporal homeostasis with its environment at the molecular level by regulating gene expression to create a peak of protein expression once every 24 hours to control when a particular physiological process is most active with respect to the solar day. Transcription and translation of core clock components (CLOCK, NPAS2, BMAL1, BMAL2, PER1, PER2, PER3, CRY1 and CRY2) plays a critical role in rhythm generation, whereas delays imposed by post-translational modifications (PTMs) are important for determining the period (tau) of the rhythms (tau refers to the period of a rhythm and is the length, in time, of one complete cycle). A diurnal rhythm is synchronized with the day/night cycle, while the ultradian and infradian rhythms have a period shorter and longer than 24 hours, respectively. Disruptions in the circadian rhythms contribute to the pathology of cardiovascular diseases, cancer, metabolic syndromes and aging. A transcription/translation feedback loop (TTFL) forms the core of the molecular circadian clock mechanism. Transcription factors, CLOCK or NPAS2 and BMAL1 or BMAL2, form the positive limb of the feedback loop, act in the form of a heterodimer and activate the transcription of core clock genes and clock-controlled genes (involved in key metabolic processes), harboring E-box elements (5'-CACGTG-3') within their promoters. The core clock genes: PER1/2/3 and CRY1/2 which are transcriptional repressors form the negative limb of the feedback loop and interact with the CLOCK|NPAS2-BMAL1|BMAL2 heterodimer inhibiting its activity and thereby negatively regulating their own expression. This heterodimer also activates nuclear receptors NR1D1/2 and RORA/B/G, which form a second feedback loop and which activate and repress BMAL1 transcription, respectively. NPAS2 positively regulates the circadian expression of AANAT in the retinal photoreceptor cells. This Gallus gallus (Chicken) protein is Neuronal PAS domain-containing protein 2 (NPAS2).